Reading from the N-terminus, the 159-residue chain is Phosphopantetheine adenylyltransferase (159 aa).

Threonine 10 is a binding site for substrate. Residues 10-11 (TF) and histidine 18 contribute to the ATP site. 3 residues coordinate substrate: lysine 42, methionine 74, and arginine 88. ATP-binding positions include 89-91 (GLR), glutamate 99, and 124-130 (WSFISSS).

It belongs to the bacterial CoaD family. Homohexamer. It depends on Mg(2+) as a cofactor.

The protein resides in the cytoplasm. It catalyses the reaction (R)-4'-phosphopantetheine + ATP + H(+) = 3'-dephospho-CoA + diphosphate. It participates in cofactor biosynthesis; coenzyme A biosynthesis; CoA from (R)-pantothenate: step 4/5. Reversibly transfers an adenylyl group from ATP to 4'-phosphopantetheine, yielding dephospho-CoA (dPCoA) and pyrophosphate. The chain is Phosphopantetheine adenylyltransferase from Yersinia enterocolitica serotype O:8 / biotype 1B (strain NCTC 13174 / 8081).